We begin with the raw amino-acid sequence, 329 residues long: SLAM family member 5 (329 aa).

An N-terminal signal peptide occupies residues 1-21 (MAQRHLWIWFLCLQTWSEAAG). Residues 22–221 (KDADPMVMNG…TPSFHPRHAV (200 aa)) lie on the Extracellular side of the membrane. Positions 26 to 129 (PMVMNGILGE…IYYLHIYRRL (104 aa)) constitute an Ig-like V-type domain. Residues 132–206 (PKITQSLISS…SNSSDSVTVQ (75 aa)) enclose the Ig-like C2-type domain. The N-linked (GlcNAc...) asparagine glycan is linked to Asn147. Cys152 and Cys190 are joined by a disulfide. The chain crosses the membrane as a helical span at residues 222 to 242 (LPGGLAVLFLLILIPMLAFLF). Residues 243–329 (RLYKRRRDRI…PKALGNEIVV (87 aa)) lie on the Cytoplasmic side of the membrane. Residues 263–268 (TVYAVV) carry the ITSM 1 motif. The residue at position 265 (Tyr265) is a Phosphotyrosine. The residue at position 280 (Tyr280) is a Phosphotyrosine; by LYN. Positions 298 to 303 (TIYSSV) match the ITSM 2 motif. Tyr300 is subject to Phosphotyrosine.

Homodimer; via its extracellular domain. Forms a head to tail dimer with a CD48 molecule from another cell. Interacts with SH2 domain-containing proteins SH2D1A/SAP and SH2D1B/EAT-2. Interacts with tyrosine-protein phosphatases PTPN6/SHP-1 and PTPN11/SHP-2 via its phosphorylated cytoplasmic domain, and this interaction is blocked by SH2D1A. Phosphorylated by tyrosine-protein kinase LCK on tyrosine residues following ligation induced by agonist monoclonal antibody. The association with SH2D1A/SAP is dependent of tyrosine phosphorylation of its cytoplasmic domain. Phosphorylated on Tyr-280 and Tyr-300 following platelet aggregation. Phosphorylated on tyrosine residues upon high affinity immunoglobulin epsilon receptor aggregation in mast cells. In terms of processing, N-glycosylated. Predominantly expressed in hematopoietic tissues such as lymph node, spleen, thymus, and bone marrow. Detected also in lung.

The protein resides in the cell membrane. Functionally, self-ligand receptor of the signaling lymphocytic activation molecule (SLAM) family. SLAM receptors triggered by homo- or heterotypic cell-cell interactions are modulating the activation and differentiation of a wide variety of immune cells and thus are involved in the regulation and interconnection of both innate and adaptive immune response. Activities are controlled by presence or absence of small cytoplasmic adapter proteins, SH2D1A/SAP and/or SH2D1B/EAT-2. Can mediate natural killer (NK) cell cytotoxicity dependent on SH2D1A and SH2D1B. Increases proliferative responses of activated T-cells and SH2D1A/SAP does not seen be required for this process. Homophilic interactions enhance interferon gamma/IFNG secretion in lymphocytes and induce platelet stimulation via a SH2D1A/SAP-dependent pathway. May serve as a marker for hematopoietic progenitor cells. Required for a prolonged T-cell:B-cell contact, optimal T follicular helper function, and germinal center formation. In germinal centers involved in maintaining B cell tolerance and in preventing autoimmunity. In mast cells negatively regulates high affinity immunoglobulin epsilon receptor signaling; independent of SH2D1A and SH2D1B but implicating FES and PTPN6/SHP-1. In macrophages enhances LPS-induced MAPK phosphorylation and NF-kappaB activation and modulates LPS-induced cytokine secretion; involving ITSM 2. Positively regulates macroautophagy in primary dendritic cells via stabilization of IRF8; inhibits TRIM21-mediated proteasomal degradation of IRF8. The sequence is that of SLAM family member 5 (Cd84) from Mus musculus (Mouse).